The following is a 267-amino-acid chain: Geranylgeranylglyceryl phosphate synthase (267 aa).

2 residues coordinate Mg(2+): Asp-23 and Ser-52. Sn-glycerol 1-phosphate contacts are provided by residues 173-179 (YLEAGSG), 205-206 (GG), and 227-228 (GT).

It belongs to the GGGP/HepGP synthase family. Group II subfamily. It depends on Mg(2+) as a cofactor.

Its subcellular location is the cytoplasm. The catalysed reaction is sn-glycerol 1-phosphate + (2E,6E,10E)-geranylgeranyl diphosphate = sn-3-O-(geranylgeranyl)glycerol 1-phosphate + diphosphate. The protein operates within membrane lipid metabolism; glycerophospholipid metabolism. Its function is as follows. Prenyltransferase that catalyzes the transfer of the geranylgeranyl moiety of geranylgeranyl diphosphate (GGPP) to the C3 hydroxyl of sn-glycerol-1-phosphate (G1P). This reaction is the first ether-bond-formation step in the biosynthesis of archaeal membrane lipids. This is Geranylgeranylglyceryl phosphate synthase from Caldivirga maquilingensis (strain ATCC 700844 / DSM 13496 / JCM 10307 / IC-167).